The chain runs to 233 residues: 7-cyano-7-deazaguanine synthase (233 aa).

8-18 serves as a coordination point for ATP; it reads FSGGQDSTTCL. Zn(2+)-binding residues include Cys188, Cys197, Cys200, and Cys203.

Belongs to the QueC family. Zn(2+) is required as a cofactor.

The catalysed reaction is 7-carboxy-7-deazaguanine + NH4(+) + ATP = 7-cyano-7-deazaguanine + ADP + phosphate + H2O + H(+). It participates in purine metabolism; 7-cyano-7-deazaguanine biosynthesis. Functionally, catalyzes the ATP-dependent conversion of 7-carboxy-7-deazaguanine (CDG) to 7-cyano-7-deazaguanine (preQ(0)). In Klebsiella pneumoniae (strain 342), this protein is 7-cyano-7-deazaguanine synthase.